A 280-amino-acid polypeptide reads, in one-letter code: Late embryogenesis abundant protein 76 (280 aa).

Disordered regions lie at residues 1 to 156 and 220 to 241; these read MASN…GEAV and EEED…TDPT. Positions 28–39 are enriched in basic and acidic residues; the sequence is MRDKAEEGKDKT. LEA 11-mer repeat repeat units lie at residues 31–41, 53–63, 75–85, 97–107, and 119–129; these read KAEEGKDKTSQ, TAQAAKDKTSQ, and TTQSSKEKTSQ. Residues 40–114 are compositionally biased toward low complexity; the sequence is SQTAQKAQQK…TSQAAQTTQQ (75 aa). Basic and acidic residues-rich tracts occupy residues 115–127 and 136–145; these read KAHE…KEKT and EKARETKDKT. The segment covering 230 to 239 has biased composition (low complexity); that stretch reads TTTCTTQSTD.

Belongs to the LEA type 4 family.

Its function is as follows. Lea proteins are late embryonic proteins abundant in higher plant seed embryos. The chain is Late embryogenesis abundant protein 76 from Brassica napus (Rape).